A 176-amino-acid chain; its full sequence is Ribosome maturation factor RimM (176 aa).

The PRC barrel domain occupies 102-175 (KNDYYWNDII…TDKKFILVQW (74 aa)).

It belongs to the RimM family. In terms of assembly, binds ribosomal protein uS19.

It is found in the cytoplasm. Its function is as follows. An accessory protein needed during the final step in the assembly of 30S ribosomal subunit, possibly for assembly of the head region. Essential for efficient processing of 16S rRNA. May be needed both before and after RbfA during the maturation of 16S rRNA. It has affinity for free ribosomal 30S subunits but not for 70S ribosomes. The sequence is that of Ribosome maturation factor RimM from Buchnera aphidicola subsp. Acyrthosiphon pisum (strain APS) (Acyrthosiphon pisum symbiotic bacterium).